The primary structure comprises 396 residues: Purine ribonucleoside efflux pump NepI (396 aa).

The Cytoplasmic portion of the chain corresponds to 1–21 (MSEFIAENRGADAITRPNWSA). A helical membrane pass occupies residues 22 to 42 (VFSVAFCVACLIIVEFLPVSL). The Periplasmic segment spans residues 43–54 (LTPMAQDLGISE). The helical transmembrane segment at 55–75 (GVAGQSVTVTAFVAMFASLFI) threads the bilayer. The Cytoplasmic segment spans residues 76-85 (TQTIQATDRR). A helical transmembrane segment spans residues 86-106 (YVVILFAVLLTLSCLLVSFAN). Position 107 (Ser-107) is a topological domain, periplasmic. Residues 108-128 (FSLLLIGRACLGLALGGFWAM) form a helical membrane-spanning segment. At 129–147 (SASLTMRLVPPRTVPKALS) the chain is on the cytoplasmic side. The helical transmembrane segment at 148–168 (VIFGAVSIALVIAAPLGSFLG) threads the bilayer. Over 169–175 (ELIGWRN) the chain is Periplasmic. Residues 176–196 (VFNAAAAMGVLCIFWIIKSLP) traverse the membrane as a helical segment. The Cytoplasmic portion of the chain corresponds to 197-215 (SLPGEPSHQKQNTFRLLQR). A helical transmembrane segment spans residues 216 to 236 (PGVMAGMIAIFMSFAGQFAFF). The Periplasmic segment spans residues 237 to 255 (TYIRPVYMNLAGFGVDGLT). Residues 256–276 (LVLLSFGIASFVGTSLSSFIL) traverse the membrane as a helical segment. At 277–281 (KRSVK) the chain is on the cytoplasmic side. The helical transmembrane segment at 282–302 (LALAGAPFVLALSALVLTLWG) threads the bilayer. Topologically, residues 303–305 (SDK) are periplasmic. A helical membrane pass occupies residues 306–326 (IVATGVAIIWGLTFALIPVGW). The Cytoplasmic portion of the chain corresponds to 327-343 (STWITRSLADQAEKAGS). The helical transmembrane segment at 344–364 (IQVAVIQLANTCGAAIGGYAL) threads the bilayer. Residues 365–366 (DN) lie on the Periplasmic side of the membrane. The helical transmembrane segment at 367–387 (IGLTSPLMLSGTLMLLTALLV) threads the bilayer. The Cytoplasmic segment spans residues 388-396 (TAKVKMKKS).

The protein belongs to the major facilitator superfamily. DHA1 family. NepI (TC 2.A.1.2.26) subfamily.

It localises to the cell inner membrane. The catalysed reaction is inosine(in) + H(+)(out) = inosine(out) + H(+)(in). It catalyses the reaction guanosine(in) + H(+)(out) = guanosine(out) + H(+)(in). Functionally, involved in the efflux of purine ribonucleosides, such as inosine and guanosine. The sequence is that of Purine ribonucleoside efflux pump NepI from Escherichia coli O1:K1 / APEC.